The primary structure comprises 229 residues: Ras-related protein Rab-33B (229 aa).

Asn43, Val44, Gly45, Lys46, Thr47, Cys48, Thr62, and Thr65 together coordinate GTP. Thr47 serves as a coordination point for Mg(2+). The short motif at 56–68 is the Switch 1 element; it reads GRFPDRTEATIGV. Mg(2+) is bound by residues Thr65 and Asp88. The short motif at 89 to 108 is the Switch 2 element; it reads TAGQERFRKSMVQHYYRNVH. 6 residues coordinate GTP: Gly91, Asn148, Lys149, Asp151, Ala179, and Lys180. 2 S-geranylgeranyl cysteine lipidation sites follow: Cys227 and Cys229. Cys229 carries the post-translational modification Cysteine methyl ester.

It belongs to the small GTPase superfamily. Rab family. As to quaternary structure, interacts (GTP- and GDP-bound forms) with ATG16L1; the complex consists of a tetramer where two RAB33B molecules bind independently one molecule of the ATG16L1 homodimer; the interaction promotes ATG12-ATG5-ATG16L1 complex recruitment to phagophores. Interacts with ATG16L2; however interaction is approximately hundred times lower than for ATG16L1. Interacts with RIC1 (via C-terminus domain); the interaction is direct with a preference for RAB33B-GTP. Interacts with RGP1. Requires Mg(2+) as cofactor. Post-translationally, prenylated.

Its subcellular location is the golgi apparatus membrane. The protein localises to the golgi apparatus. It is found in the cis-Golgi network. It localises to the preautophagosomal structure membrane. It catalyses the reaction GTP + H2O = GDP + phosphate + H(+). Its activity is regulated as follows. Regulated by guanine nucleotide exchange factors (GEFs) which promote the exchange of bound GDP for free GTP. Regulated by GTPase activating proteins (GAPs) such as SGSM2 which increase the GTP hydrolysis activity. Inhibited by GDP dissociation inhibitors (GDIs). In terms of biological role, the small GTPases Rab are key regulators of intracellular membrane trafficking, from the formation of transport vesicles to their fusion with membranes. Rabs cycle between an inactive GDP-bound form and an active GTP-bound form that is able to recruit to membranes different sets of downstream effectors directly responsible for vesicle formation, movement, tethering and fusion. RAB33B acts, in coordination with RAB6A, to regulate intra-Golgi retrograde trafficking. Participates in autophagosome formation by recruiting the ATG12-ATG5-ATG16L1 complex to phagophores, probably in a nucleotide-independent manner. This is Ras-related protein Rab-33B from Homo sapiens (Human).